Reading from the N-terminus, the 93-residue chain is Small ribosomal subunit protein uS19 (93 aa).

It belongs to the universal ribosomal protein uS19 family.

Functionally, protein S19 forms a complex with S13 that binds strongly to the 16S ribosomal RNA. The sequence is that of Small ribosomal subunit protein uS19 from Leuconostoc citreum (strain KM20).